The primary structure comprises 940 residues: UvrABC system protein A (940 aa).

31-38 lines the ATP pocket; that stretch reads GLSGSGKS. The C4-type zinc-finger motif lies at 252 to 279; it reads CPQCGYSMQELEPRLFSFNNPAGACGTC. 2 consecutive ABC transporter domains span residues 309–586 and 606–936; these read WDQK…PNSL and RDPK…RFLK. 639-646 is a binding site for ATP; sequence GVSGSGKS. A C4-type zinc finger spans residues 739–765; sequence CEACQGDGVIKVEMHFLPDVYVPCDVC.

The protein belongs to the ABC transporter superfamily. UvrA family. As to quaternary structure, forms a heterotetramer with UvrB during the search for lesions.

The protein resides in the cytoplasm. In terms of biological role, the UvrABC repair system catalyzes the recognition and processing of DNA lesions. UvrA is an ATPase and a DNA-binding protein. A damage recognition complex composed of 2 UvrA and 2 UvrB subunits scans DNA for abnormalities. When the presence of a lesion has been verified by UvrB, the UvrA molecules dissociate. This is UvrABC system protein A from Vibrio parahaemolyticus serotype O3:K6 (strain RIMD 2210633).